The sequence spans 84 residues: Cell division topological specificity factor (84 aa).

This sequence belongs to the MinE family.

Prevents the cell division inhibition by proteins MinC and MinD at internal division sites while permitting inhibition at polar sites. This ensures cell division at the proper site by restricting the formation of a division septum at the midpoint of the long axis of the cell. This Cupriavidus metallidurans (strain ATCC 43123 / DSM 2839 / NBRC 102507 / CH34) (Ralstonia metallidurans) protein is Cell division topological specificity factor.